The following is a 968-amino-acid chain: RNA polymerase-associated protein RapA (968 aa).

The 171-residue stretch at 164 to 334 folds into the Helicase ATP-binding domain; that stretch reads DVGRRHAPRV…FARLRLLDPN (171 aa). 177–184 provides a ligand contact to ATP; that stretch reads DEVGLGKT. Positions 280 to 283 match the DEAH box motif; it reads DEAH. One can recognise a Helicase C-terminal domain in the interval 490-685; the sequence is RVEWLMGYLT…ALKAQLEQGR (196 aa).

The protein belongs to the SNF2/RAD54 helicase family. RapA subfamily. In terms of assembly, interacts with the RNAP. Has a higher affinity for the core RNAP than for the holoenzyme. Its ATPase activity is stimulated by binding to RNAP.

In terms of biological role, transcription regulator that activates transcription by stimulating RNA polymerase (RNAP) recycling in case of stress conditions such as supercoiled DNA or high salt concentrations. Probably acts by releasing the RNAP, when it is trapped or immobilized on tightly supercoiled DNA. Does not activate transcription on linear DNA. Probably not involved in DNA repair. This chain is RNA polymerase-associated protein RapA, found in Salmonella typhimurium (strain LT2 / SGSC1412 / ATCC 700720).